The chain runs to 590 residues: Putative ABC transporter ATP-binding protein MM_3016 (590 aa).

2 consecutive ABC transporter domains span residues 11–251 (VRFE…KLGI) and 317–550 (VRIE…AGLI). ATP is bound by residues 45-52 (GPSGCGKS) and 350-357 (GHNGAGKT).

The protein belongs to the ABC transporter superfamily.

Its subcellular location is the cell membrane. In terms of biological role, probably part of an ABC transporter complex. Responsible for energy coupling to the transport system. This chain is Putative ABC transporter ATP-binding protein MM_3016, found in Methanosarcina mazei (strain ATCC BAA-159 / DSM 3647 / Goe1 / Go1 / JCM 11833 / OCM 88) (Methanosarcina frisia).